We begin with the raw amino-acid sequence, 430 residues long: MPSVVVVGTQWGDEGKGKITDFLSSNAEVIARYQGGDNAGHTIVIDGKKFKLHLIPSGIFFPEKISVIGNGVVVNPKSLIEEIAYLAENGVSANSLRISDRAHVILPYHKKLDFLQEEAKGDKKIGTTIKGIGPAYMDKAARVGIRIADLLDKEIFEERLRTNLEVKNREFVKMYDSEPLEFEEIFEEYYEYGQQLKKYVTDTSVILNDALDAGKRVLFEGAQGVMLDIDQGTYPFVTSSNPVAGGVTIGSGVGPSKISKVVGVCKAYTSRVGDGPFPTELFDEVGHQIREVGHEYGTTTGRPRRVGWFDSVVMRHAKRVSGLTNLSLNSIDVLSGLETVKICVAYERSNGEQITHYPASLKELADCKPIYEELPGWSEDITSCRTLEELPEAARNYVRRVGELVGVRISTFSVGPGREQTNVLESVWGV.

GTP contacts are provided by residues 12 to 18 (GDEGKGK) and 40 to 42 (GHT). Asp13 serves as the catalytic Proton acceptor. Mg(2+)-binding residues include Asp13 and Gly40. Residues 13 to 16 (DEGK), 38 to 41 (NAGH), Thr128, Arg142, Gln223, Thr238, and Arg302 contribute to the IMP site. His41 serves as the catalytic Proton donor. 298–304 (TTTGRPR) contacts substrate. Residues Arg304, 330-332 (SID), and 413-415 (SVG) each bind GTP.

This sequence belongs to the adenylosuccinate synthetase family. In terms of assembly, homodimer. Mg(2+) is required as a cofactor.

Its subcellular location is the cytoplasm. It carries out the reaction IMP + L-aspartate + GTP = N(6)-(1,2-dicarboxyethyl)-AMP + GDP + phosphate + 2 H(+). It functions in the pathway purine metabolism; AMP biosynthesis via de novo pathway; AMP from IMP: step 1/2. Functionally, plays an important role in the de novo pathway of purine nucleotide biosynthesis. Catalyzes the first committed step in the biosynthesis of AMP from IMP. This chain is Adenylosuccinate synthetase, found in Lactococcus lactis subsp. cremoris (strain SK11).